Consider the following 212-residue polypeptide: 2-C-methyl-D-erythritol 4-phosphate cytidylyltransferase (212 aa).

It belongs to the IspD/TarI cytidylyltransferase family. IspD subfamily.

It carries out the reaction 2-C-methyl-D-erythritol 4-phosphate + CTP + H(+) = 4-CDP-2-C-methyl-D-erythritol + diphosphate. Its pathway is isoprenoid biosynthesis; isopentenyl diphosphate biosynthesis via DXP pathway; isopentenyl diphosphate from 1-deoxy-D-xylulose 5-phosphate: step 2/6. Its function is as follows. Catalyzes the formation of 4-diphosphocytidyl-2-C-methyl-D-erythritol from CTP and 2-C-methyl-D-erythritol 4-phosphate (MEP). This Chlamydia felis (strain Fe/C-56) (Chlamydophila felis) protein is 2-C-methyl-D-erythritol 4-phosphate cytidylyltransferase.